We begin with the raw amino-acid sequence, 230 residues long: Large ribosomal subunit protein uL1 (230 aa).

It belongs to the universal ribosomal protein uL1 family. Part of the 50S ribosomal subunit.

Functionally, binds directly to 23S rRNA. The L1 stalk is quite mobile in the ribosome, and is involved in E site tRNA release. Protein L1 is also a translational repressor protein, it controls the translation of the L11 operon by binding to its mRNA. In Bacillus mycoides (strain KBAB4) (Bacillus weihenstephanensis), this protein is Large ribosomal subunit protein uL1.